The following is a 137-amino-acid chain: Large ribosomal subunit protein uL22 (137 aa).

The protein belongs to the universal ribosomal protein uL22 family. As to quaternary structure, part of the 50S ribosomal subunit.

Functionally, this protein binds specifically to 23S rRNA; its binding is stimulated by other ribosomal proteins, e.g. L4, L17, and L20. It is important during the early stages of 50S assembly. It makes multiple contacts with different domains of the 23S rRNA in the assembled 50S subunit and ribosome. Its function is as follows. The globular domain of the protein is located near the polypeptide exit tunnel on the outside of the subunit, while an extended beta-hairpin is found that lines the wall of the exit tunnel in the center of the 70S ribosome. The chain is Large ribosomal subunit protein uL22 from Flavobacterium johnsoniae (strain ATCC 17061 / DSM 2064 / JCM 8514 / BCRC 14874 / CCUG 350202 / NBRC 14942 / NCIMB 11054 / UW101) (Cytophaga johnsonae).